The following is a 174-amino-acid chain: Secreted protein A (174 aa).

The first 19 residues, 1–19 (MRLLITLFAIFALFNCSLA), serve as a signal peptide directing secretion. N-linked (GlcNAc...) asparagine glycosylation occurs at asparagine 156.

Belongs to the Sct family. In terms of processing, probably contains disulfide bonds.

The protein resides in the secreted. It is found in the extracellular vesicle. In Dictyostelium discoideum (Social amoeba), this protein is Secreted protein A (p17).